The chain runs to 36 residues: U1-ectatotoxin-Et1b subunit B (36 aa).

Cysteines 11 and 33 form a disulfide.

This sequence belongs to the ectatomin family. Ectatomin-Et subfamily. As to quaternary structure, heterodimer of subunits A and B; disulfide-linked. In terms of tissue distribution, expressed by the venom gland.

It localises to the secreted. Its subcellular location is the target cell membrane. This is U1-ectatotoxin-Et1b subunit B from Ectatomma tuberculatum (Selva ant).